We begin with the raw amino-acid sequence, 176 residues long: Large ribosomal subunit protein uL10 (176 aa).

It belongs to the universal ribosomal protein uL10 family. Part of the ribosomal stalk of the 50S ribosomal subunit. The N-terminus interacts with L11 and the large rRNA to form the base of the stalk. The C-terminus forms an elongated spine to which L12 dimers bind in a sequential fashion forming a multimeric L10(L12)X complex.

In terms of biological role, forms part of the ribosomal stalk, playing a central role in the interaction of the ribosome with GTP-bound translation factors. The protein is Large ribosomal subunit protein uL10 of Natranaerobius thermophilus (strain ATCC BAA-1301 / DSM 18059 / JW/NM-WN-LF).